The primary structure comprises 324 residues: Antihemorrhagic factor cHLP-A (324 aa).

A signal peptide spans 1 to 19 (MNSLVALVLLGQIIGSTLS). 2 Cystatin fetuin-A-type domains span residues 21 to 130 (QLGP…VKCK) and 141 to 254 (RNCP…SDCV). 6 disulfides stabilise this stretch: C28/C315, C85/C96, C110/C129, C143/C146, C205/C217, and C230/C253. Residue N204 is glycosylated (N-linked (GlcNAc...) asparagine). N-linked (GlcNAc...) asparagine glycosylation is present at N282.

Belongs to the fetuin family. As to quaternary structure, homodimer. In terms of tissue distribution, expressed by the liver.

It is found in the secreted. Its function is as follows. Potent inhibitor of hemorrhagic activity but also proteolytic activities. Inhibition occurs by formation of a non-covalent complex between this protein and the proteinases at their metalloproteinase domains. The protein is Antihemorrhagic factor cHLP-A of Gloydius brevicauda (Korean slamosa snake).